Reading from the N-terminus, the 357-residue chain is 3-dehydroquinate synthase (357 aa).

NAD(+) is bound by residues 104–108 (GVVGD), 128–129 (TT), Lys141, and 168–171 (FLET). Zn(2+)-binding residues include Glu183, His243, and His260.

This sequence belongs to the sugar phosphate cyclases superfamily. Dehydroquinate synthase family. Requires Co(2+) as cofactor. Zn(2+) is required as a cofactor. The cofactor is NAD(+).

The protein resides in the cytoplasm. It carries out the reaction 7-phospho-2-dehydro-3-deoxy-D-arabino-heptonate = 3-dehydroquinate + phosphate. Its pathway is metabolic intermediate biosynthesis; chorismate biosynthesis; chorismate from D-erythrose 4-phosphate and phosphoenolpyruvate: step 2/7. Functionally, catalyzes the conversion of 3-deoxy-D-arabino-heptulosonate 7-phosphate (DAHP) to dehydroquinate (DHQ). The protein is 3-dehydroquinate synthase of Streptococcus pyogenes serotype M49 (strain NZ131).